We begin with the raw amino-acid sequence, 420 residues long: Mannose-1-phosphate guanylyltransferase regulatory subunit alpha (420 aa).

The segment at 2–251 is substrate-binding domain; it reads LKAVILIGGP…DGIWSQIKSA (250 aa). GDP-alpha-D-mannose-binding residues include E85 and Q247. The hexapeptide repeat domain stretch occupies residues 273–420; it reads LAKHTPGGPR…SRSFTNQIIL (148 aa). The C-loop stretch occupies residues 356-384; the sequence is TPNDPNPNDPRAHMDSESLFKDGKLLPAI.

The protein belongs to the transferase hexapeptide repeat family. Component of the GMPPA-GMPPB mannose-1-phosphate guanylyltransferase complex composed of 4 GMPPA subunits and 8 GMPPB subunits; the complex is organized into three layers, a central layer made up of 2 GMPPA dimers sandwiched between two layers each made up of 2 GMPPB dimers. In terms of tissue distribution, expressed in the liver (at protein level).

It is found in the cytoplasm. Functionally, regulatory subunit of the GMPPA-GMPPB mannose-1-phosphate guanylyltransferase complex; reduces the catalytic activity of GMPPB when part of the complex. Mediates allosteric feedback inhibition of GMPPB catalytic activity upon binding GDP-alpha-D-mannose. Together with GMPPB regulates GDP-alpha-D-mannose levels. This chain is Mannose-1-phosphate guanylyltransferase regulatory subunit alpha (GMPPA), found in Sus scrofa (Pig).